Consider the following 425-residue polypeptide: Dihydroorotase (425 aa).

Zn(2+)-binding residues include His56 and His58. Substrate is bound by residues 58–60 (HYR) and Asn90. Zn(2+) is bound by residues Asp148, His175, and His228. Position 274 (Asn274) interacts with substrate. Asp301 lines the Zn(2+) pocket. Asp301 is an active-site residue. Substrate contacts are provided by residues His305 and 319–320 (FG).

The protein belongs to the metallo-dependent hydrolases superfamily. DHOase family. Class I DHOase subfamily. The cofactor is Zn(2+).

The enzyme catalyses (S)-dihydroorotate + H2O = N-carbamoyl-L-aspartate + H(+). It functions in the pathway pyrimidine metabolism; UMP biosynthesis via de novo pathway; (S)-dihydroorotate from bicarbonate: step 3/3. Catalyzes the reversible cyclization of carbamoyl aspartate to dihydroorotate. This chain is Dihydroorotase, found in Lactobacillus gasseri (strain ATCC 33323 / DSM 20243 / BCRC 14619 / CIP 102991 / JCM 1131 / KCTC 3163 / NCIMB 11718 / NCTC 13722 / AM63).